Consider the following 780-residue polypeptide: ATP-dependent 6-phosphofructokinase, muscle type (780 aa).

Residue Thr-2 is modified to N-acetylthreonine. The segment at 2-390 is N-terminal catalytic PFK domain 1; the sequence is THEEHHAAKS…NWEVYKLLAH (389 aa). ATP is bound by residues Gly-25, 88-89, and 118-121; these read RC and GDGS. Position 119 (Asp-119) interacts with Mg(2+). Substrate is bound by residues 164–166, Arg-201, 208–210, Glu-264, Arg-292, and 298–301; these read SID, MGR, and HVQR. Asp-166 acts as the Proton acceptor in catalysis. Ser-377 is modified (phosphoserine). Positions 391-401 are interdomain linker; sequence VRPPVTKSGSY. The C-terminal regulatory PFK domain 2 stretch occupies residues 402–780; the sequence is TVAVMNVGAP…TRKRSGEATI (379 aa). Beta-D-fructose 2,6-bisphosphate-binding positions include Arg-471 and 528–532; that span reads TVSNN. An O-linked (GlcNAc) serine glycan is attached at Ser-530. Lys-557 carries the post-translational modification N6-(2-hydroxyisobutyryl)lysine. Beta-D-fructose 2,6-bisphosphate is bound by residues Arg-566, 573-575, Glu-629, Arg-655, and 661-664; these read MGG and HMQQ. Ser-667 is modified (phosphoserine). Position 735 (Arg-735) interacts with beta-D-fructose 2,6-bisphosphate. Ser-775 carries the post-translational modification Phosphoserine.

The protein belongs to the phosphofructokinase type A (PFKA) family. ATP-dependent PFK group I subfamily. Eukaryotic two domain clade 'E' sub-subfamily. In terms of assembly, homo- and heterotetramers. Phosphofructokinase (PFK) enzyme functions as a tetramer composed of different combinations of 3 types of subunits, called PFKM (M), PFKL (L) and PFKP (P). The composition of the PFK tetramer differs according to the tissue type it is present in. The kinetic and regulatory properties of the tetrameric enzyme are dependent on the subunit composition, hence can vary across tissues. Interacts (via C-terminus) with HK1 (via N-terminal spermatogenic cell-specific region). The cofactor is Mg(2+). GlcNAcylation decreases enzyme activity.

The protein localises to the cytoplasm. It catalyses the reaction beta-D-fructose 6-phosphate + ATP = beta-D-fructose 1,6-bisphosphate + ADP + H(+). It functions in the pathway carbohydrate degradation; glycolysis; D-glyceraldehyde 3-phosphate and glycerone phosphate from D-glucose: step 3/4. Its activity is regulated as follows. Allosterically activated by ADP, AMP, or fructose 2,6-bisphosphate, and allosterically inhibited by ATP or citrate. Its function is as follows. Catalyzes the phosphorylation of D-fructose 6-phosphate to fructose 1,6-bisphosphate by ATP, the first committing step of glycolysis. This is ATP-dependent 6-phosphofructokinase, muscle type (PFKM) from Sus scrofa (Pig).